The sequence spans 241 residues: MIVIPAIDLFDNCAVRLFKGNYEEKKIYSSEPWKLAESFAKNGATLLHLVDLNGARNQLGVNEDSILKIRETTSLKVQLGGGIRDKEKLAYYDKIGINRFILGTAAVTNPDLLKYALDNYGKERVVVAVDARDGIVKIAGWEKDSGIHYRDLLERLVKAGIEHIVFTDIAQDGTLAGPNLEAYREILNSYPFQVIASGGIASLKDLMDLSSLKTKISLYGVITGKALYEGKLDLAKAISSI.

The active-site Proton acceptor is aspartate 8. Aspartate 130 acts as the Proton donor in catalysis.

This sequence belongs to the HisA/HisF family.

The protein resides in the cytoplasm. The catalysed reaction is 1-(5-phospho-beta-D-ribosyl)-5-[(5-phospho-beta-D-ribosylamino)methylideneamino]imidazole-4-carboxamide = 5-[(5-phospho-1-deoxy-D-ribulos-1-ylimino)methylamino]-1-(5-phospho-beta-D-ribosyl)imidazole-4-carboxamide. Its pathway is amino-acid biosynthesis; L-histidine biosynthesis; L-histidine from 5-phospho-alpha-D-ribose 1-diphosphate: step 4/9. The protein is 1-(5-phosphoribosyl)-5-[(5-phosphoribosylamino)methylideneamino] imidazole-4-carboxamide isomerase of Leptospira interrogans serogroup Icterohaemorrhagiae serovar copenhageni (strain Fiocruz L1-130).